The chain runs to 211 residues: Ribosomal RNA small subunit methyltransferase G (211 aa).

S-adenosyl-L-methionine contacts are provided by residues G73, 126-127 (IE), and R142.

It belongs to the methyltransferase superfamily. RNA methyltransferase RsmG family.

Its subcellular location is the cytoplasm. The catalysed reaction is guanosine(527) in 16S rRNA + S-adenosyl-L-methionine = N(7)-methylguanosine(527) in 16S rRNA + S-adenosyl-L-homocysteine. Its function is as follows. Specifically methylates the N7 position of guanine in position 527 of 16S rRNA. The polypeptide is Ribosomal RNA small subunit methyltransferase G (Methylorubrum populi (strain ATCC BAA-705 / NCIMB 13946 / BJ001) (Methylobacterium populi)).